Consider the following 73-residue polypeptide: U3-agatoxin-Ao1e (73 aa).

The first 20 residues, 1–20, serve as a signal peptide directing secretion; that stretch reads MRTIISLLLLSAMVFAVIEA. A propeptide spanning residues 21–34 is cleaved from the precursor; it reads ISLEEGLQLFEGER. Intrachain disulfides connect Cys-36–Cys-52, Cys-43–Cys-57, Cys-51–Cys-67, and Cys-59–Cys-65. Residue Asn-71 is modified to Asparagine amide.

Belongs to the neurotoxin 07 (Beta/delta-agtx) family. 03 (aga-4) subfamily. Aga sub-subfamily. As to expression, expressed by the venom gland.

The protein localises to the secreted. Its function is as follows. Insecticidal neurotoxin that induces an irreversible spastic paralysis when injected into insects. Modifies presynaptic voltage-gated sodium channels (Nav), causing them to open at the normal resting potential of the nerve. This leads to spontaneous release of neurotransmitter and repetitive action potentials in motor neurons. In Agelena orientalis (Funnel-web spider), this protein is U3-agatoxin-Ao1e.